We begin with the raw amino-acid sequence, 188 residues long: Elongation factor P-like protein (188 aa).

This sequence belongs to the elongation factor P family.

The chain is Elongation factor P-like protein from Vibrio vulnificus (strain CMCP6).